Reading from the N-terminus, the 365-residue chain is Histidinol-phosphate aminotransferase (365 aa).

Residue lysine 223 is modified to N6-(pyridoxal phosphate)lysine.

This sequence belongs to the class-II pyridoxal-phosphate-dependent aminotransferase family. Histidinol-phosphate aminotransferase subfamily. Homodimer. The cofactor is pyridoxal 5'-phosphate.

The enzyme catalyses L-histidinol phosphate + 2-oxoglutarate = 3-(imidazol-4-yl)-2-oxopropyl phosphate + L-glutamate. The protein operates within amino-acid biosynthesis; L-histidine biosynthesis; L-histidine from 5-phospho-alpha-D-ribose 1-diphosphate: step 7/9. In Bacillus pumilus (strain SAFR-032), this protein is Histidinol-phosphate aminotransferase.